Reading from the N-terminus, the 293-residue chain is Prohibitin-2 (293 aa).

A helical; Signal-anchor for type II membrane protein membrane pass occupies residues phenylalanine 21 to leucine 41. A coiled-coil region spans residues glycine 190–alanine 235.

The protein belongs to the prohibitin family. As to quaternary structure, the mitochondrial prohibitin complex consists of two subunits (PHB1 and PHB2), assembled into a membrane-associated ring-shaped supercomplex of approximately 1 mDa.

The protein resides in the mitochondrion inner membrane. The protein localises to the cytoplasm. It localises to the nucleus. Its subcellular location is the cell membrane. Protein with pleiotropic attributes mediated in a cell-compartment- and tissue-specific manner, which include the plasma membrane-associated cell signaling functions, mitochondrial chaperone, and transcriptional co-regulator of transcription factors and sex steroid hormones in the nucleus. In terms of biological role, in the mitochondria, together with PHB, forms large ring complexes (prohibitin complexes) in the inner mitochondrial membrane (IMM) and functions as a chaperone protein that stabilizes mitochondrial respiratory enzymes and maintains mitochondrial integrity in the IMM, which is required for mitochondrial morphogenesis, neuronal survival, and normal lifespan. Functionally, in the nucleus, serves as transcriptional co-regulator. In Dictyostelium discoideum (Social amoeba), this protein is Prohibitin-2 (phbB).